Here is a 363-residue protein sequence, read N- to C-terminus: Disease resistance protein RBA1 (363 aa).

Residues 12–175 (PVPKVFLSFR…EIVKEVERVL (164 aa)) form the TIR domain. NAD(+) contacts are provided by residues 21–26 (RGEEIR) and Gly53. Glu86 is a catalytic residue.

In terms of assembly, homooligomer; homooligomerization is required for activity.

The protein resides in the cytoplasm. It is found in the nucleus. The protein localises to the nucleoplasm. It carries out the reaction NAD(+) + H2O = ADP-D-ribose + nicotinamide + H(+). The catalysed reaction is NADP(+) + H2O = ADP-D-ribose 2'-phosphate + nicotinamide + H(+). Functionally, disease resistance (R) protein that specifically recognizes the HopBA1 type III effector protein from P.syringae, and triggers cell death. Acts as a NAD(+) hydrolase (NADase): in response to pathogen-recognition, catalyzes cleavage of NAD(+) into ADP-D-ribose (ADPR) and nicotinamide; NAD(+) cleavage triggering a defense system that promotes cell death. In addition to ADPR, also generates a cyclization variant of cyclic ADPR (cADPR), termed v-cADPR, for which the cyclizing bond is unknown. Also able to hydrolyze NADP(+), but not other NAD(+)-related molecules. The polypeptide is Disease resistance protein RBA1 (Arabidopsis thaliana (Mouse-ear cress)).